Reading from the N-terminus, the 704-residue chain is Neutral ceramidase (704 aa).

The signal sequence occupies residues 1–23 (MAISKIAFLALIALSGLCGLASA). Asn230 is a glycosylation site (N-linked (GlcNAc...) asparagine). The active-site Nucleophile is Ser276. Asn362, Asn550, and Asn598 each carry an N-linked (GlcNAc...) asparagine glycan.

This sequence belongs to the neutral ceramidase family. Post-translationally, N-glycosylated.

The protein resides in the secreted. The catalysed reaction is an N-acylsphing-4-enine + H2O = sphing-4-enine + a fatty acid. Functionally, hydrolyzes the sphingolipid ceramide into sphingosine and free fatty acid at an optimal pH of 6.5-7.5. Acts as a key regulator of sphingolipid signaling metabolites by generating sphingosine at the cell surface. The protein is Neutral ceramidase (CDase) of Drosophila pseudoobscura pseudoobscura (Fruit fly).